Here is a 284-residue protein sequence, read N- to C-terminus: 2-dehydro-3-deoxyphosphooctonate aldolase (284 aa).

This sequence belongs to the KdsA family.

The protein localises to the cytoplasm. The enzyme catalyses D-arabinose 5-phosphate + phosphoenolpyruvate + H2O = 3-deoxy-alpha-D-manno-2-octulosonate-8-phosphate + phosphate. It participates in carbohydrate biosynthesis; 3-deoxy-D-manno-octulosonate biosynthesis; 3-deoxy-D-manno-octulosonate from D-ribulose 5-phosphate: step 2/3. It functions in the pathway bacterial outer membrane biogenesis; lipopolysaccharide biosynthesis. This is 2-dehydro-3-deoxyphosphooctonate aldolase from Erwinia tasmaniensis (strain DSM 17950 / CFBP 7177 / CIP 109463 / NCPPB 4357 / Et1/99).